Here is a 1136-residue protein sequence, read N- to C-terminus: Nuclear pore complex protein Nup133 (1136 aa).

Positions 1-26 (MFSPRGTPGSGRRQAPRTGGRRSVSA) are disordered.

It belongs to the nucleoporin Nup133 family. As to quaternary structure, forms part of the Nup160 subcomplex in the nuclear pore which is composed of NUP160, NUP133, NUP107 and Nup96. This complex plays a role in RNA export and in tethering Nup98 and NUP153 to the nucleus. In terms of tissue distribution, widely expressed in the embryo and in adult tissues. Higher expression is observed in the brain, testes, ovary, skin, and kidney.

Its subcellular location is the nucleus. It is found in the nuclear pore complex. The protein localises to the chromosome. It localises to the centromere. The protein resides in the kinetochore. In terms of biological role, involved in poly(A)+ RNA transport. Involved in nephrogenesis. The chain is Nuclear pore complex protein Nup133 from Danio rerio (Zebrafish).